A 213-amino-acid polypeptide reads, in one-letter code: NADH-quinone oxidoreductase subunit I (213 aa).

2 4Fe-4S ferredoxin-type domains span residues 74–103 and 113–142; these read RFIE…METS and GNYS…HGTE. [4Fe-4S] cluster is bound by residues cysteine 83, cysteine 86, cysteine 89, cysteine 93, cysteine 122, cysteine 125, cysteine 128, and cysteine 132.

Belongs to the complex I 23 kDa subunit family. As to quaternary structure, NDH-1 is composed of 14 different subunits. Subunits NuoA, H, J, K, L, M, N constitute the membrane sector of the complex. [4Fe-4S] cluster is required as a cofactor.

The protein resides in the cell inner membrane. It carries out the reaction a quinone + NADH + 5 H(+)(in) = a quinol + NAD(+) + 4 H(+)(out). NDH-1 shuttles electrons from NADH, via FMN and iron-sulfur (Fe-S) centers, to quinones in the respiratory chain. The immediate electron acceptor for the enzyme in this species is believed to be ubiquinone. Couples the redox reaction to proton translocation (for every two electrons transferred, four hydrogen ions are translocated across the cytoplasmic membrane), and thus conserves the redox energy in a proton gradient. This chain is NADH-quinone oxidoreductase subunit I, found in Campylobacter jejuni subsp. jejuni serotype O:6 (strain 81116 / NCTC 11828).